The sequence spans 160 residues: Cytochrome b6-f complex subunit 4 (160 aa).

The next 3 membrane-spanning stretches (helical) occupy residues 36 to 56 (LLYMFPVVILGTLFCLVSLAV), 95 to 115 (LIGILLMAGVPVGLATVPFIE), and 131 to 151 (AVFLFGTLVAIWLGIGATLPI).

The protein belongs to the cytochrome b family. PetD subfamily. In terms of assembly, the 4 large subunits of the cytochrome b6-f complex are cytochrome b6, subunit IV (17 kDa polypeptide, petD), cytochrome f and the Rieske protein, while the 4 small subunits are petG, petL, petM and petN. The complex functions as a dimer.

The protein localises to the plastid. It is found in the chloroplast thylakoid membrane. Component of the cytochrome b6-f complex, which mediates electron transfer between photosystem II (PSII) and photosystem I (PSI), cyclic electron flow around PSI, and state transitions. The chain is Cytochrome b6-f complex subunit 4 from Bigelowiella natans (Pedinomonas minutissima).